The primary structure comprises 177 residues: Cytochrome c-type biogenesis protein CcmE (177 aa).

Over 1 to 8 (MNPRRKSR) the chain is Cytoplasmic. The helical; Signal-anchor for type II membrane protein transmembrane segment at 9–29 (LKVVMAVLSGLAVAVGLTLYA) threads the bilayer. Topologically, residues 30-177 (LSQNIDLFYT…QISQPFGENK (148 aa)) are periplasmic. 2 residues coordinate heme: histidine 131 and tyrosine 135. Residues 134-177 (NYMPPELGDQMKKQHQPMGISEADLKGKSERDATQISQPFGENK) form a disordered region. Positions 156 to 166 (ADLKGKSERDA) are enriched in basic and acidic residues. Residues 167 to 177 (TQISQPFGENK) show a composition bias toward polar residues.

The protein belongs to the CcmE/CycJ family.

The protein resides in the cell inner membrane. In terms of biological role, heme chaperone required for the biogenesis of c-type cytochromes. Transiently binds heme delivered by CcmC and transfers the heme to apo-cytochromes in a process facilitated by CcmF and CcmH. This is Cytochrome c-type biogenesis protein CcmE from Glaesserella parasuis serovar 5 (strain SH0165) (Haemophilus parasuis).